The primary structure comprises 668 residues: DNA ligase (668 aa).

NAD(+) contacts are provided by residues 32–36, 81–82, and Glu-110; these read DSEYD and SL. The N6-AMP-lysine intermediate role is filled by Lys-112. Residues Arg-133, Glu-167, Lys-283, and Lys-307 each contribute to the NAD(+) site. The Zn(2+) site is built by Cys-401, Cys-404, Cys-419, and Cys-424. The region spanning 586-668 is the BRCT domain; the sequence is QTDSEFNGKT…IQKQKEVENK (83 aa).

It belongs to the NAD-dependent DNA ligase family. LigA subfamily. Mg(2+) is required as a cofactor. The cofactor is Mn(2+).

It catalyses the reaction NAD(+) + (deoxyribonucleotide)n-3'-hydroxyl + 5'-phospho-(deoxyribonucleotide)m = (deoxyribonucleotide)n+m + AMP + beta-nicotinamide D-nucleotide.. Functionally, DNA ligase that catalyzes the formation of phosphodiester linkages between 5'-phosphoryl and 3'-hydroxyl groups in double-stranded DNA using NAD as a coenzyme and as the energy source for the reaction. It is essential for DNA replication and repair of damaged DNA. The sequence is that of DNA ligase from Staphylococcus carnosus (strain TM300).